The primary structure comprises 303 residues: Taste receptor type 2 member 13 (303 aa).

Residues 1–7 are Extracellular-facing; that stretch reads MKSALPS. Residues 8 to 28 traverse the membrane as a helical segment; that stretch reads IFTLVIIAEFIIGNLSNGFIV. Residues 29–55 lie on the Cytoplasmic side of the membrane; sequence LINCIDWVSKRELSSVDKLLIILAISR. A helical transmembrane segment spans residues 56-76; the sequence is IGLIWEILVSWFLALHYLAIF. At 77–85 the chain is on the extracellular side; sequence VSGTGLRIM. Residues 86 to 106 traverse the membrane as a helical segment; sequence IFSWIVSNHFNLWLATILSIF. Residues 107–128 are Cytoplasmic-facing; that stretch reads YLLKIASFSSPAFLYLKWRVNK. Residues 129–149 form a helical membrane-spanning segment; the sequence is VILLILLGTLVFLFLNLIQIN. The Extracellular segment spans residues 150–184; it reads MHIKDWLDRYERNTTWNFSMSDFETFSVSVKFTMT. N-linked (GlcNAc...) asparagine glycosylation is found at asparagine 162 and asparagine 166. Residues 185–205 traverse the membrane as a helical segment; the sequence is MFSLTPFTVAFISFLLLIFSL. Residues 206–232 lie on the Cytoplasmic side of the membrane; the sequence is QKHLQKMQLNYKGHRDPKTKVHTNALK. The helical transmembrane segment at 233-253 threads the bilayer; sequence IVISFLLFYASFFLCVLXSWI. Residues 254–261 lie on the Extracellular side of the membrane; it reads SELYQNTV. The chain crosses the membrane as a helical span at residues 262 to 282; sequence IYMLCETIGVFYPSSHSFLLI. Topologically, residues 283-303 are cytoplasmic; sequence LGNAKLRQAFLLVAAKVWAKR.

This sequence belongs to the G-protein coupled receptor T2R family.

Its subcellular location is the membrane. Receptor that may play a role in the perception of bitterness and is gustducin-linked. May play a role in sensing the chemical composition of the gastrointestinal content. The activity of this receptor may stimulate alpha gustducin, mediate PLC-beta-2 activation and lead to the gating of TRPM5. This is Taste receptor type 2 member 13 (TAS2R13) from Gorilla gorilla gorilla (Western lowland gorilla).